Here is a 252-residue protein sequence, read N- to C-terminus: MGIADEADRTLFVGNLDPQVTEEVIFELFLQAGPLIKVKIPKDNEGKSKLFAFVNFKHEVSVPYALNLLNGIRLHGRQLNIKFKTGSSHINQEGKSPANSQNPSPANTPGHRGGRTPEQMGSPSYSPPQHMQRPFSSPDTLQRQAMMNNMWQVQMQQLQMLSGTFQQGMQQLRGNADGGWSGHRGQRHSPQDNNNHQGRDQRHGNGANNYERNRRDGQRGDFYHHDDRSGGHNRNYPPDRRRDSREGRWKHF.

The RRM domain occupies 9-86 (RTLFVGNLDP…RQLNIKFKTG (78 aa)). 2 stretches are compositionally biased toward polar residues: residues 88-107 (SHIN…SPAN) and 119-137 (QMGS…PFSS). 2 disordered regions span residues 88-137 (SHIN…PFSS) and 171-252 (QLRG…WKHF). Basic and acidic residues-rich tracts occupy residues 211-230 (ERNR…DRSG) and 237-252 (PPDR…WKHF).

In terms of assembly, component of the nuclear exosome targeting (NEXT) complex composed of MTREX, ZCCHC8, and RBM7 that directs a subset of non-coding short-lived RNAs for exosomal degradation.

It is found in the nucleus. Its subcellular location is the nucleoplasm. Functionally, RNA-binding subunit of the trimeric nuclear exosome targeting (NEXT) complex, a complex that functions as an RNA exosome cofactor that directs a subset of non-coding short-lived RNAs for exosomal degradation. NEXT is involved in surveillance and turnover of aberrant transcripts and non-coding RNAs. Binds preferentially polyuridine sequences and associates with newly synthesized RNAs, including pre-mRNAs and short-lived exosome substrates such as promoter upstream transcripts (PROMPTs), enhancer RNAs (eRNAs), and 3'-extended products from small nuclear RNAs (snRNAs). In Danio rerio (Zebrafish), this protein is RNA-binding protein 7.